The primary structure comprises 479 residues: Ankyrin repeat, SAM and basic leucine zipper domain-containing protein 1 (479 aa).

S22 and S24 each carry phosphoserine. 6 ANK repeats span residues 49–78 (EKNETFKKALTTGDILLVKELLNSGISVDS), 82–111 (YGWTPLMYAASVSNVELVRVLLDRGANASF), 114–148 (DKQTILITACSARGSEEQILKCVELLLSRNADPNV), 152–181 (RLMTPIMYAARDGHTQVVALLVAHGAEVNT), 185–214 (NGYTALTWAARQGHKNVVLKLLELGANKML), and 218–247 (DGKTPSEIAKRNKHVEIFSFLSLTLNPLEG). Positions 276-338 (SYTALGDLEI…KILDALKELQ (63 aa)) constitute an SAM domain.

As to quaternary structure, interacts with DDX4, PIWIL1, RANBP9 and TDRD1.

It is found in the cytoplasm. Plays a central role during spermatogenesis by repressing transposable elements and preventing their mobilization, which is essential for the germline integrity. Acts via the piRNA metabolic process, which mediates the repression of transposable elements during meiosis by forming complexes composed of piRNAs and Piwi proteins and governs the methylation and subsequent repression of transposons. Its association with pi-bodies suggests a participation in the primary piRNAs metabolic process. Required prior to the pachytene stage to facilitate the production of multiple types of piRNAs, including those associated with repeats involved in the regulation of retrotransposons. May act by mediating protein-protein interactions during germ cell maturation. The polypeptide is Ankyrin repeat, SAM and basic leucine zipper domain-containing protein 1 (ASZ1) (Rhinolophus ferrumequinum (Greater horseshoe bat)).